Consider the following 188-residue polypeptide: Elongation factor P (188 aa).

K34 is modified (N6-(3,6-diaminohexanoyl)-5-hydroxylysine).

Belongs to the elongation factor P family. May be beta-lysylated on the epsilon-amino group of Lys-34 by the combined action of EpmA and EpmB, and then hydroxylated on the C5 position of the same residue by EpmC (if this protein is present). Lysylation is critical for the stimulatory effect of EF-P on peptide-bond formation. The lysylation moiety may extend toward the peptidyltransferase center and stabilize the terminal 3-CCA end of the tRNA. Hydroxylation of the C5 position on Lys-34 may allow additional potential stabilizing hydrogen-bond interactions with the P-tRNA.

Its subcellular location is the cytoplasm. It functions in the pathway protein biosynthesis; polypeptide chain elongation. Involved in peptide bond synthesis. Alleviates ribosome stalling that occurs when 3 or more consecutive Pro residues or the sequence PPG is present in a protein, possibly by augmenting the peptidyl transferase activity of the ribosome. Modification of Lys-34 is required for alleviation. This chain is Elongation factor P, found in Aliivibrio fischeri (strain ATCC 700601 / ES114) (Vibrio fischeri).